A 731-amino-acid polypeptide reads, in one-letter code: Replication restart protein PriA (731 aa).

Positions 1–98 (MSVAHVALPV…HPIGDVLFHA (98 aa)) are 3'BD. Residues 115–177 (WYWFATEQGQ…RGKGLAELAC (63 aa)) form a WH region. Positions 200 to 375 (TEQATAVGAI…VRQGKYRQLT (176 aa)) are helicase lobe 1. Residues 210-376 (HSAADRFSAW…RQGKYRQLTL (167 aa)) form the Helicase ATP-binding domain. An ATP-binding site is contributed by 223–230 (GITGSGKT). ADP-binding residues include G226, G228, K229, T230, E231, and R263. The short motif at 319–322 (DEEH) is the DEAH box element. An Aromatic-rich loop (ARL) motif is present at residues 326–340 (YKQQEGWRYHARDLA). The segment at 387–430 (QQHVLDLKGQPLQAGLSPALISRMRQHLQADNQVILFLNRRGFA) is helicase lobe 2, N-terminus. The tract at residues 431 to 485 (PALLCHDCGWIAECPRCDSYYTLHQAQHHLRCHHCDSQRPIPRQCPSCGSTHLVP) is CRR. C435, C438, C444, C447, C462, C465, C475, and C478 together coordinate Zn(2+). The 168-residue stretch at 470 to 637 (PIPRQCPSCG…QLPPWTSHVL (168 aa)) folds into the Helicase C-terminal domain. The segment at 486-626 (VGIGTEQLEQ…AEQALAERQT (141 aa)) is helicase lobe 2, C-terminus. Position 543 (K543) interacts with ADP. The segment at 633-731 (TSHVLIRAED…WVLDVDPIEG (99 aa)) is CTD.

This sequence belongs to the helicase family. PriA subfamily. Binds SSB. Component of the replication restart primosome. Requires Zn(2+) as cofactor.

It catalyses the reaction Couples ATP hydrolysis with the unwinding of duplex DNA by translocating in the 3'-5' direction.. The enzyme catalyses ATP + H2O = ADP + phosphate + H(+). ATPase activity is stimulated by single-stranded binding protein (SSB). Functionally, initiates the restart of stalled replication forks, which reloads the replicative helicase on sites other than the origin of replication. Recognizes and binds to abandoned replication forks and remodels them to uncover a helicase loading site. Promotes assembly of the primosome at these replication forks. In terms of biological role, recognizes abandoned replication forks and remodels SSB on ssDNA to uncover a loading site for DnaB. Binds replication fork DNA, has DNA-dependent ATPase activity in the presence of replication fork DNA, restores normal cell growth and SOS induction to E.coli mutant pirA304. The polypeptide is Replication restart protein PriA (Klebsiella pneumoniae subsp. pneumoniae (strain ATCC 700721 / MGH 78578)).